A 239-amino-acid chain; its full sequence is Acidic leucine-rich nuclear phosphoprotein 32 family member B (239 aa).

LRR repeat units follow at residues 16 to 40 (AADA…LTSE), 43 to 64 (SLEF…PKLP), 65 to 87 (KLKK…AERT), and 89 to 110 (NLTH…EPLK). Residues 123-165 (CEVTMLNNYRESVFELLPKLTFLDGFDADDQEAPDSDPEAEDL) form the LRRCT domain. The segment covering 149 to 215 (DADDQEAPDS…EEDEDDEDVP (67 aa)) has biased composition (acidic residues). Positions 149 to 239 (DADDQEAPDS…EEEEDDEDDE (91 aa)) are disordered. Over residues 216–225 (QGEKRKRDLS) the composition is skewed to basic and acidic residues. A compositionally biased stretch (acidic residues) spans 226–239 (DEGEEEEEDDEDDE).

This sequence belongs to the ANP32 family.

It localises to the nucleus. Its function is as follows. Multifunctional protein working as a cell cycle progression factor as well as a cell survival factor. Required for the progression from the G1 to the S phase. Anti-apoptotic protein which functions as a caspase-3 inhibitor. Has no phosphatase 2A (PP2A) inhibitor activity. Exhibits histone chaperone properties, stimulating core histones to assemble into a nucleosome. The chain is Acidic leucine-rich nuclear phosphoprotein 32 family member B (anp32b) from Xenopus laevis (African clawed frog).